A 283-amino-acid polypeptide reads, in one-letter code: Cyclin-C (283 aa).

One can recognise a Cyclin N-terminal domain in the interval 46-144 (NVIQALGEHL…VLECEFYLLE (99 aa)). A disordered region spans residues 252 to 283 (TILSKMPKPKPPPNSEGEQGPNGSQNSSYSQS). The segment covering 272–283 (PNGSQNSSYSQS) has biased composition (polar residues). The residue at position 275 (serine 275) is a Phosphoserine.

Belongs to the cyclin family. Cyclin C subfamily. As to quaternary structure, component of the Mediator complex, which is composed of MED1, MED4, MED6, MED7, MED8, MED9, MED10, MED11, MED12, MED13, MED13L, MED14, MED15, MED16, MED17, MED18, MED19, MED20, MED21, MED22, MED23, MED24, MED25, MED26, MED27, MED29, MED30, MED31, CCNC, CDK8 and CDC2L6/CDK11. The MED12, MED13, CCNC and CDK8 subunits form a distinct module termed the CDK8 module. Mediator containing the CDK8 module is less active than Mediator lacking this module in supporting transcriptional activation. Individual preparations of the Mediator complex lacking one or more distinct subunits have been variously termed ARC, CRSP, DRIP, PC2, SMCC and TRAP. The cylin/CDK pair formed by CCNC/CDK8 also associates with the large subunit of RNA polymerase II.

Its subcellular location is the nucleus. Its function is as follows. Component of the Mediator complex, a coactivator involved in regulated gene transcription of nearly all RNA polymerase II-dependent genes. Mediator functions as a bridge to convey information from gene-specific regulatory proteins to the basal RNA polymerase II transcription machinery. Mediator is recruited to promoters by direct interactions with regulatory proteins and serves as a scaffold for the assembly of a functional preinitiation complex with RNA polymerase II and the general transcription factors. Binds to and activates cyclin-dependent kinase CDK8 that phosphorylates the CTD (C-terminal domain) of the large subunit of RNA polymerase II (RNAp II), which may inhibit the formation of a transcription initiation complex. The protein is Cyclin-C (CCNC) of Bos taurus (Bovine).